Reading from the N-terminus, the 123-residue chain is MAVQMRTMLEVADNSGARKLQMINPLGGGAGHVAHLGDVVTAAVKEASPDGTAKKGTVVKAVIVRTHKEHRRKDGTYIRFDTNAAVLINDTGEPVGTRVFGPVARELREKKFLKIVSLAPEVL.

This sequence belongs to the universal ribosomal protein uL14 family. Part of the 50S ribosomal subunit. Forms a cluster with proteins L3 and L19. In the 70S ribosome, L14 and L19 interact and together make contacts with the 16S rRNA in bridges B5 and B8.

Its function is as follows. Binds to 23S rRNA. Forms part of two intersubunit bridges in the 70S ribosome. This is Large ribosomal subunit protein uL14 from Koribacter versatilis (strain Ellin345).